A 692-amino-acid polypeptide reads, in one-letter code: Translation initiation factor IF-2 (692 aa).

The segment at 51 to 114 (KAKPENAKKG…KPAETPGKIT (64 aa)) is disordered. Positions 59–84 (KGQNQKQSNNQQQNRQKQNQKNQSKP) are enriched in low complexity. Positions 85-94 (NKNKKQKGPK) are enriched in basic residues. A tr-type G domain is found at 193 to 362 (ERPAVVTIMG…LLVSEVEELK (170 aa)). A G1 region spans residues 202 to 209 (GHVDHGKT). 202–209 (GHVDHGKT) is a GTP binding site. The interval 227–231 (GITQH) is G2. The tract at residues 248–251 (DTPG) is G3. GTP contacts are provided by residues 248-252 (DTPGH) and 302-305 (NKMD). A G4 region spans residues 302–305 (NKMD). The segment at 338 to 340 (SAI) is G5.

The protein belongs to the TRAFAC class translation factor GTPase superfamily. Classic translation factor GTPase family. IF-2 subfamily.

It localises to the cytoplasm. One of the essential components for the initiation of protein synthesis. Protects formylmethionyl-tRNA from spontaneous hydrolysis and promotes its binding to the 30S ribosomal subunits. Also involved in the hydrolysis of GTP during the formation of the 70S ribosomal complex. The polypeptide is Translation initiation factor IF-2 (Oceanobacillus iheyensis (strain DSM 14371 / CIP 107618 / JCM 11309 / KCTC 3954 / HTE831)).